The primary structure comprises 444 residues: Trigger factor (444 aa).

A PPIase FKBP-type domain is found at asparagine 170–threonine 255.

Belongs to the FKBP-type PPIase family. Tig subfamily.

The protein localises to the cytoplasm. It carries out the reaction [protein]-peptidylproline (omega=180) = [protein]-peptidylproline (omega=0). Functionally, involved in protein export. Acts as a chaperone by maintaining the newly synthesized protein in an open conformation. Functions as a peptidyl-prolyl cis-trans isomerase. The sequence is that of Trigger factor (tig) from Mycoplasma pneumoniae (strain ATCC 29342 / M129 / Subtype 1) (Mycoplasmoides pneumoniae).